The chain runs to 248 residues: tRNA pseudouridine synthase A (248 aa).

Asp-53 serves as the catalytic Nucleophile. Residue Tyr-111 coordinates substrate.

The protein belongs to the tRNA pseudouridine synthase TruA family. In terms of assembly, homodimer.

The catalysed reaction is uridine(38/39/40) in tRNA = pseudouridine(38/39/40) in tRNA. Formation of pseudouridine at positions 38, 39 and 40 in the anticodon stem and loop of transfer RNAs. The polypeptide is tRNA pseudouridine synthase A (Listeria monocytogenes serotype 4a (strain HCC23)).